A 263-amino-acid polypeptide reads, in one-letter code: Troponin T, slow skeletal muscle (263 aa).

A compositionally biased stretch (acidic residues) spans 1–38 (MSDAEEQEYEEEQPEEEEAAEEEEEAPEEPEPAAEPEE). 2 disordered regions span residues 1–64 (MSDA…RVDF) and 109–154 (AERA…KKKV). Phosphoserine; by CK2 is present on Ser-2. The segment covering 44 to 56 (SRPVVPPLIPPKI) has biased composition (pro residues). Positions 109-150 (AERAEQQRFRTEKERERQAKLAEEKMRKEEEEAKKRAEDDAK) are enriched in basic and acidic residues.

Belongs to the troponin T family. As to quaternary structure, interacts with TPM3. As to expression, expressed dominantly in slow muscles, like masseter, diaphragm, psoas major and spinnalis. Isoform 2 is also expressed in fast muscles.

In terms of biological role, troponin T is the tropomyosin-binding subunit of troponin, the thin filament regulatory complex which confers calcium-sensitivity to striated muscle actomyosin ATPase activity. This Bos taurus (Bovine) protein is Troponin T, slow skeletal muscle (TNNT1).